Consider the following 239-residue polypeptide: Orotidine 5'-phosphate decarboxylase (239 aa).

Substrate contacts are provided by residues Asp-10, Lys-32, 59–68, Thr-122, Arg-184, Gln-193, Gly-213, and Arg-214; that span reads DLKLHDIPNT. Lys-61 serves as the catalytic Proton donor.

This sequence belongs to the OMP decarboxylase family. Type 1 subfamily. As to quaternary structure, homodimer.

The catalysed reaction is orotidine 5'-phosphate + H(+) = UMP + CO2. It participates in pyrimidine metabolism; UMP biosynthesis via de novo pathway; UMP from orotate: step 2/2. Catalyzes the decarboxylation of orotidine 5'-monophosphate (OMP) to uridine 5'-monophosphate (UMP). The sequence is that of Orotidine 5'-phosphate decarboxylase from Shouchella clausii (strain KSM-K16) (Alkalihalobacillus clausii).